The primary structure comprises 433 residues: MGQNFSKKSGNDLVSRIVFTILILIVCRFGSFIPIPGIDSIALSSVAEKNQSGILGMFNMLSGGSLGRMSIFALAIMPYITASIIIQLMSVAYKPLENLKKEGEVGKRKVNQLSRYLTVLLASFQAYGVAISLESIVTNTGPVVILAGFFFRVTTVITLVVGTMLLMWLGEQITQRGIGNGTSLIIFIGIISGVPSAIISMFELSRKGALSPLIALAVCIGVVVLIAIIIFFEKAQRKLLVQYPKRQVGNKIYGGEATHMPLKLNTSGVIPPIFASSILLFPATLANFSNSNSETMGMLTYYLGHGKPVYILLYVALIMFFSFFYTAIVFNSEETANNLRKYGAYIPGKRPGKNTSDYFDYILTRLTVIGGIYLSVICVIPELLMNKYVISLSLGGTSFLIVVNVVLDTMTQIQTYLFSSKYEGLMKKVKLKN.

10 consecutive transmembrane segments (helical) span residues 17-37, 71-91, 117-137, 141-161, 184-204, 212-232, 268-288, 310-330, 366-386, and 388-408; these read IVFTILILIVCRFGSFIPIPG, IFALAIMPYITASIIIQLMSV, LTVLLASFQAYGVAISLESIV, GPVVILAGFFFRVTTVITLVV, LIIFIGIISGVPSAIISMFEL, PLIALAVCIGVVVLIAIIIFF, GVIPPIFASSILLFPATLANF, YILLYVALIMFFSFFYTAIVF, LTVIGGIYLSVICVIPELLMN, and YVISLSLGGTSFLIVVNVVLD.

It belongs to the SecY/SEC61-alpha family. Component of the Sec protein translocase complex. Heterotrimer consisting of SecY, SecE and SecG subunits. The heterotrimers can form oligomers, although 1 heterotrimer is thought to be able to translocate proteins. Interacts with the ribosome. Interacts with SecDF, and other proteins may be involved. Interacts with SecA.

The protein localises to the cell inner membrane. Functionally, the central subunit of the protein translocation channel SecYEG. Consists of two halves formed by TMs 1-5 and 6-10. These two domains form a lateral gate at the front which open onto the bilayer between TMs 2 and 7, and are clamped together by SecE at the back. The channel is closed by both a pore ring composed of hydrophobic SecY resides and a short helix (helix 2A) on the extracellular side of the membrane which forms a plug. The plug probably moves laterally to allow the channel to open. The ring and the pore may move independently. This chain is Protein translocase subunit SecY, found in Rickettsia felis (strain ATCC VR-1525 / URRWXCal2) (Rickettsia azadi).